The following is a 151-amino-acid chain: MPKSPPRFLNSPLSDFFIKWMSRINTWMYRRNDGEGLGGTFQKIPVALLTTTGRKTGQPRVNPLYFLRDGGRVIVAASKGGAEKNPMWYLNLKANPKVQVQIKKEVLDLTARDATDEERAEYWPQLVTMYPSYQDYQSWTDRTIPIVVCEP.

Residues 54 to 56 (RKT), 60 to 65 (RVNPLY), 76 to 79 (AASK), 87 to 91 (MWYLN), and Tyr-133 contribute to the coenzyme F420-(gamma-Glu)n site.

It belongs to the F420H(2)-dependent quinone reductase family.

The protein localises to the cell membrane. The catalysed reaction is oxidized coenzyme F420-(gamma-L-Glu)(n) + a quinol + H(+) = reduced coenzyme F420-(gamma-L-Glu)(n) + a quinone. Involved in a F420-dependent anti-oxidant mechanism that protects M.tuberculosis against oxidative stress and bactericidal agents. Catalyzes the F420H(2)-dependent two-electron reduction of quinones to dihydroquinones, thereby preventing the formation of cytotoxic semiquinones obtained by the one-electron reduction pathway. In vitro, catalyzes the reduction of both benzoquinone and naphthoquinone analogs; since menaquinone is the sole quinone electron carrier in the respiratory chain in M.tuberculosis, the physiological electron acceptor for Fqr-mediated F420H(2) oxidation is therefore likely to be the endogenous menaquinone found in the membrane fraction of M.tuberculosis. Is able to use F420 species with two and five glutamate residues in its polyglutamate tail. Cannot use NADH or NADPH instead of F420H(2) as the electron donor. Its function is as follows. Is involved in the bioreductive activation of bicyclic 4-nitroimidazole prodrugs such as PA-824 and delamanid developed for anti-tuberculosis therapy against both replicating and persistent bacteria. It converts PA-824 into three primary metabolites resulting from reduction of the imidazole ring at C-3; the major one is the corresponding des-nitroimidazole that generates lethal reactive nitrogen species, including nitric oxide (NO), which appears to be responsible for the anaerobic killing activity. Ddn uses the reduced F420 produced by FGD1 to activate PA-824. Delamanid (OPC-67683) is also reduced by Ddn to its des-nitro form. This Mycobacterium tuberculosis (strain CDC 1551 / Oshkosh) protein is Deazaflavin-dependent nitroreductase (ddn).